Consider the following 309-residue polypeptide: Homoserine kinase (309 aa).

88–98 (PLARGLGSSAA) contacts ATP.

It belongs to the GHMP kinase family. Homoserine kinase subfamily.

It is found in the cytoplasm. It catalyses the reaction L-homoserine + ATP = O-phospho-L-homoserine + ADP + H(+). It functions in the pathway amino-acid biosynthesis; L-threonine biosynthesis; L-threonine from L-aspartate: step 4/5. Functionally, catalyzes the ATP-dependent phosphorylation of L-homoserine to L-homoserine phosphate. This chain is Homoserine kinase, found in Halalkalibacterium halodurans (strain ATCC BAA-125 / DSM 18197 / FERM 7344 / JCM 9153 / C-125) (Bacillus halodurans).